The primary structure comprises 451 residues: MVVKVKQKIPLKIKRMGINGEGIGFYQKTLVFVPGALKGENIFCQITAVKRNFAEAKLLTVNKASKNRVKPACSVYETCGGCQIMHLAYPKQLDFKDDVIRQALKKFKPTGYEQFEIRPTLGMKKPDHYRAKLQFQLRSFGGTVKAGLFSQGSHRLVPIDNCLVQDQLTQDIINKITQLVDKYKLPIYNERKIAGIRTIMVRKAQASDQVQIIVVSSKEVRLANFIGELTKAFPQVKTVALNSNRSKSSEIYGDETEILWGQEAIHEEVLDYGFALSPRAFYQLNPQQTEVLYGEVVKALDVGSKDHIIDAYCGVGSIGFAFAGKVKSVRGMDIIPEAIEDAQKNAKAMGFDNAYYEAGKAEDIIPKWYKQGYRADAIIVDPPRTGLDDKLLKTILHYQPKQMVYVSCNTSTLARDLVQLTKVYDVHYIQSVDMFPHTARTEAVVKLQKRV.

Residues 2-60 enclose the TRAM domain; it reads VVKVKQKIPLKIKRMGINGEGIGFYQKTLVFVPGALKGENIFCQITAVKRNFAEAKLLT. Residues cysteine 73, cysteine 79, cysteine 82, and cysteine 162 each coordinate [4Fe-4S] cluster. 4 residues coordinate S-adenosyl-L-methionine: glutamine 283, tyrosine 312, aspartate 333, and aspartate 381. The active-site Nucleophile is the cysteine 408.

It belongs to the class I-like SAM-binding methyltransferase superfamily. RNA M5U methyltransferase family.

This is an uncharacterized protein from Streptococcus pyogenes serotype M3 (strain ATCC BAA-595 / MGAS315).